Reading from the N-terminus, the 126-residue chain is uncharacterized protein (126 aa).

Disordered regions lie at residues 15–72 and 93–126; these read PEWG…SDPQ and TQIP…TTSN. Basic and acidic residues-rich tracts occupy residues 29 to 46 and 55 to 64; these read DPLD…RVPE and VQEDSREHGQ.

This is an uncharacterized protein from Homo sapiens (Human).